Here is a 203-residue protein sequence, read N- to C-terminus: Orotate phosphoribosyltransferase (203 aa).

5-phospho-alpha-D-ribose 1-diphosphate-binding positions include Arg-94, Lys-98, His-100, and Glu-120–Ser-128. Ser-124 is an orotate binding site.

Belongs to the purine/pyrimidine phosphoribosyltransferase family. PyrE subfamily. Homodimer. The cofactor is Mg(2+).

It carries out the reaction orotidine 5'-phosphate + diphosphate = orotate + 5-phospho-alpha-D-ribose 1-diphosphate. It functions in the pathway pyrimidine metabolism; UMP biosynthesis via de novo pathway; UMP from orotate: step 1/2. In terms of biological role, catalyzes the transfer of a ribosyl phosphate group from 5-phosphoribose 1-diphosphate to orotate, leading to the formation of orotidine monophosphate (OMP). The polypeptide is Orotate phosphoribosyltransferase (Staphylococcus aureus (strain MSSA476)).